The primary structure comprises 160 residues: Ribosomal RNA large subunit methyltransferase H (160 aa).

Gly108 contributes to the S-adenosyl-L-methionine binding site.

This sequence belongs to the RNA methyltransferase RlmH family. As to quaternary structure, homodimer.

The protein resides in the cytoplasm. It carries out the reaction pseudouridine(1915) in 23S rRNA + S-adenosyl-L-methionine = N(3)-methylpseudouridine(1915) in 23S rRNA + S-adenosyl-L-homocysteine + H(+). In terms of biological role, specifically methylates the pseudouridine at position 1915 (m3Psi1915) in 23S rRNA. This is Ribosomal RNA large subunit methyltransferase H from Rhodopseudomonas palustris (strain BisA53).